The chain runs to 139 residues: NADPH-dependent 7-cyano-7-deazaguanine reductase (139 aa).

Cysteine 34 serves as the catalytic Thioimide intermediate. The active-site Proton donor is the aspartate 41. Substrate contacts are provided by residues 56–58 and 75–76; these read VEL and HE.

This sequence belongs to the GTP cyclohydrolase I family. QueF type 1 subfamily.

Its subcellular location is the cytoplasm. It carries out the reaction 7-aminomethyl-7-carbaguanine + 2 NADP(+) = 7-cyano-7-deazaguanine + 2 NADPH + 3 H(+). It functions in the pathway tRNA modification; tRNA-queuosine biosynthesis. Catalyzes the NADPH-dependent reduction of 7-cyano-7-deazaguanine (preQ0) to 7-aminomethyl-7-deazaguanine (preQ1). The sequence is that of NADPH-dependent 7-cyano-7-deazaguanine reductase from Methylobacillus flagellatus (strain ATCC 51484 / DSM 6875 / VKM B-1610 / KT).